The primary structure comprises 125 residues: Protein Bouncer (125 aa).

A signal peptide spans 1 to 18 (MGCVLLFLLLVCVPVVLP). 5 disulfide bridges follow: C23–C48, C26–C35, C42–C66, C72–C91, and C92–C97. Residues 23–98 (CLFCPVTSLN…FSCCGGHYCN (76 aa)) form the UPAR/Ly6 domain. A glycan (N-linked (GlcNAc...) asparagine) is linked at N32. N84 carries N-linked (GlcNAc...) asparagine glycosylation. A lipid anchor (GPI-anchor amidated asparagine) is attached at N98. A propeptide spans 99–125 (SQPRAEPGGRLLLLLLPAAALTAAGAL) (removed in mature form).

This sequence belongs to the SPACA4/bouncer family. Interacts with spermatocyte complex composed of izumo1, spaca6 and tmem81. Post-translationally, N-glycosylated. In terms of tissue distribution, highly expressed in oocytes. Not expressed in testis.

The protein resides in the cell membrane. Functionally, oocyte-expressed fertilization factor that mediates sperm-egg binding and is essential for sperm entry into the egg. Necessary and sufficient to mediate species-specific gamete recognition and fertilization, which is essential for vertebrate species performing external fertilization. External fertilization cannot guarantee that only conspecific sperm reaches the egg by precopulatory mate choice: proteins such as Bouncer can therefore support the selection of conspecific sperm. In Danio rerio (Zebrafish), this protein is Protein Bouncer.